Consider the following 181-residue polypeptide: Adenylate kinase (181 aa).

10-15 (GAGKGT) contributes to the ATP binding site. The interval 30-59 (STGDLFRDNITNETELGVEAKRYLDAGDLV) is NMP. AMP-binding positions include Thr31, Arg36, 57–59 (DLV), 85–88 (GYPR), and Gln92. Residues 126–132 (GRGRADD) are LID. An ATP-binding site is contributed by Arg127. The AMP site is built by Arg129 and Arg140. Gly166 contacts ATP.

It belongs to the adenylate kinase family. Monomer.

The protein localises to the cytoplasm. The catalysed reaction is AMP + ATP = 2 ADP. It functions in the pathway purine metabolism; AMP biosynthesis via salvage pathway; AMP from ADP: step 1/1. Its function is as follows. Catalyzes the reversible transfer of the terminal phosphate group between ATP and AMP. Plays an important role in cellular energy homeostasis and in adenine nucleotide metabolism. This is Adenylate kinase from Mycobacterium sp. (strain MCS).